Consider the following 213-residue polypeptide: Orotate phosphoribosyltransferase (213 aa).

Lysine 26 contacts 5-phospho-alpha-D-ribose 1-diphosphate. Residue phenylalanine 34–phenylalanine 35 participates in orotate binding. Residues tyrosine 72–lysine 73, arginine 99, lysine 100, lysine 103, histidine 105, and aspartate 124–alanine 132 each bind 5-phospho-alpha-D-ribose 1-diphosphate. Orotate is bound by residues threonine 128 and arginine 156.

The protein belongs to the purine/pyrimidine phosphoribosyltransferase family. PyrE subfamily. Homodimer. Mg(2+) is required as a cofactor.

The enzyme catalyses orotidine 5'-phosphate + diphosphate = orotate + 5-phospho-alpha-D-ribose 1-diphosphate. The protein operates within pyrimidine metabolism; UMP biosynthesis via de novo pathway; UMP from orotate: step 1/2. Its function is as follows. Catalyzes the transfer of a ribosyl phosphate group from 5-phosphoribose 1-diphosphate to orotate, leading to the formation of orotidine monophosphate (OMP). The polypeptide is Orotate phosphoribosyltransferase (Pseudomonas paraeruginosa (strain DSM 24068 / PA7) (Pseudomonas aeruginosa (strain PA7))).